Reading from the N-terminus, the 86-residue chain is Mu-theraphotoxin-Cg2a 2 (86 aa).

Positions 1–21 (MKVSVVITLAVLGVMFVWASA) are cleaved as a signal peptide. A propeptide spanning residues 22 to 50 (AELEERGSDQRDSPAWIKSMERIFQSEER) is cleaved from the precursor. 3 cysteine pairs are disulfide-bonded: C52/C66, C59/C71, and C65/C78. Residue F84 is modified to Phenylalanine amide.

Belongs to the neurotoxin 10 (Hwtx-1) family. 37 (Jztx-31) subfamily. As to expression, expressed by the venom gland.

Its subcellular location is the secreted. Inhibits both peak current and fast inactivation of voltage-gated sodium channels (Nav) channels. Inhibits the inactivation of Nav on DRG neurons (EC(50)=1.77 uM) and peak current of cardiac myocytes (IC(50)=0.90 uM). This is Mu-theraphotoxin-Cg2a 2 from Chilobrachys guangxiensis (Chinese earth tiger tarantula).